Here is a 915-residue protein sequence, read N- to C-terminus: p53-induced death domain-containing protein 1 (915 aa).

Ala2 bears the N-acetylalanine mark. LRR repeat units lie at residues 131-152 (CLAH…VPEL), 154-176 (GLDA…GALP), 177-199 (ALTF…GSLS), 200-221 (TLQR…IGNL), 223-245 (SLSE…AGLR), 246-268 (SLRL…VHLP), and 269-290 (LITR…LLDA). Position 304 is a phosphoserine (Ser304). 2 ZU5 domains span residues 327–459 (DLDS…VLRP) and 460–601 (VSNT…WYTT). Peptidase S68 stretches follow at residues 428–457 (DLET…LVVL) and 571–599 (DITT…WLWY). Active-site residues include His449, Ser451, His591, and Ser593. The UPA domain stretch occupies residues 585 to 721 (ARFQVTHFSW…TTALDREAQD (137 aa)). The Death domain occupies 793 to 878 (TQSNLLSVAS…DVAEEVRAIL (86 aa)). Residues 888–915 (SIRRTGLAPEDSTLPGTSASQTPESAQA) are disordered. The span at 901 to 915 (LPGTSASQTPESAQA) shows a compositional bias: polar residues.

Forms a complex named the PIDDosome with CASP2 and CRADD. Forms a complex with IKBKG and RIPK1. Interacts with FADD and MADD. In terms of processing, undergoes autoproteolytic processing whose extent either directs cells towards survival or apoptotic pathways. Autoproteolytically cleaved into two main fragments PIDD-N and PIDD-C. PIDD-C can be further processed into PIDD-CC, a processing which is enhanced by DNA damage. The cleavage producing PIDD-C is required for translocation of PIDD1 to the nucleus upon DNA damage and activation of NF-kappa-B. PIDD-CC mediates the interaction with CRADD and the cleavage producing PIDD-CC is required for the activation of CASP2. PIDD-N remains associated with PIDD-C and PIDD-CC after cleavage. In terms of tissue distribution, ubiquitous.

Its subcellular location is the cytoplasm. It is found in the nucleus. Functionally, component of the DNA damage/stress response pathway that functions downstream of p53/TP53 and can either promote cell survival or apoptosis. Associated with CRADD and the CASP2 caspase, it forms the PIDDosome a complex that activates CASP2 and triggers apoptosis. Associated with IKBKG and RIPK1, it enhances sumoylation and ubiquitination of IKBKG which is important for activation of the transcription factor NF-kappa-B. The sequence is that of p53-induced death domain-containing protein 1 from Mus musculus (Mouse).